The chain runs to 246 residues: Probable transcriptional regulatory protein YebC (246 aa).

The disordered stretch occupies residues 1–20 (MAGHSKWANTRHRKAAQDAK).

The protein belongs to the TACO1 family.

Its subcellular location is the cytoplasm. The sequence is that of Probable transcriptional regulatory protein YebC from Shigella dysenteriae serotype 1 (strain Sd197).